Reading from the N-terminus, the 380-residue chain is Chorismate synthase (380 aa).

Arginine 40 and arginine 46 together coordinate NADP(+). FMN-binding positions include 128-130 (RSS), 247-248 (QA), glycine 292, 307-311 (KPIPT), and arginine 333.

This sequence belongs to the chorismate synthase family. As to quaternary structure, homotetramer. FMNH2 serves as cofactor.

It catalyses the reaction 5-O-(1-carboxyvinyl)-3-phosphoshikimate = chorismate + phosphate. It participates in metabolic intermediate biosynthesis; chorismate biosynthesis; chorismate from D-erythrose 4-phosphate and phosphoenolpyruvate: step 7/7. Catalyzes the anti-1,4-elimination of the C-3 phosphate and the C-6 proR hydrogen from 5-enolpyruvylshikimate-3-phosphate (EPSP) to yield chorismate, which is the branch point compound that serves as the starting substrate for the three terminal pathways of aromatic amino acid biosynthesis. This reaction introduces a second double bond into the aromatic ring system. The protein is Chorismate synthase of Alkaliphilus metalliredigens (strain QYMF).